The following is a 322-amino-acid chain: Ribosomal RNA small subunit methyltransferase H (322 aa).

S-adenosyl-L-methionine contacts are provided by residues 40 to 42, D60, F84, D106, and Q113; that span reads GGH.

This sequence belongs to the methyltransferase superfamily. RsmH family.

It is found in the cytoplasm. The catalysed reaction is cytidine(1402) in 16S rRNA + S-adenosyl-L-methionine = N(4)-methylcytidine(1402) in 16S rRNA + S-adenosyl-L-homocysteine + H(+). Functionally, specifically methylates the N4 position of cytidine in position 1402 (C1402) of 16S rRNA. The protein is Ribosomal RNA small subunit methyltransferase H of Mannheimia succiniciproducens (strain KCTC 0769BP / MBEL55E).